We begin with the raw amino-acid sequence, 496 residues long: Polyamine oxidase 6 (496 aa).

Positions 1–27 (MTKPTTMAIFLVLALSIAQLLPSLVAG) are cleaved as a signal peptide. 2 residues coordinate FAD: glutamate 61 and arginine 69. N-linked (GlcNAc...) asparagine glycosylation is found at asparagine 103 and asparagine 150. An FAD-binding site is contributed by valine 261. The N-linked (GlcNAc...) asparagine glycan is linked to asparagine 278. Residue glutamate 454 participates in FAD binding.

It belongs to the flavin monoamine oxidase family. It depends on FAD as a cofactor.

The protein localises to the secreted. It localises to the extracellular space. The protein resides in the apoplast. It participates in amine and polyamine degradation; spermine degradation. Its function is as follows. Flavoenzyme involved in polyamine back-conversion. Catalyzes the oxidation of the secondary amino group of polyamines, such as spermine and spermidine. The chain is Polyamine oxidase 6 from Oryza sativa subsp. japonica (Rice).